Consider the following 62-residue polypeptide: Amolopin-P2 (62 aa).

The signal sequence occupies residues 1-22 (MFTLKKSLLLLFFLGTISLSLC). Residues 23–44 (EQERGADEEENGGEVTEQEVKR) constitute a propeptide that is removed on maturation.

The protein belongs to the frog skin active peptide (FSAP) family. Amolopin subfamily. As to expression, expressed by the skin glands.

The protein localises to the secreted. Functionally, antimicrobial peptide with activity against Gram-positive bacteria. Has been tested against S.aureus (MIC=37.5 ug/mL), against B.pumilus (MIC=75.0 ug/mL), B.cereus (no activity detected). Does not show activity against Gram-negative bacteria (E.coli, B.dysenteriae, A.calcoaceticus, P.aeruginosa) and fungi (C.albicans). Does not show hemolytic activity against rabbit erythrocytes. The protein is Amolopin-P2 of Amolops loloensis (Lolokou Sucker Frog).